Consider the following 193-residue polypeptide: Non-canonical purine NTP pyrophosphatase homolog (193 aa).

It belongs to the HAM1 NTPase family.

The protein is Non-canonical purine NTP pyrophosphatase homolog of Halalkalibacterium halodurans (strain ATCC BAA-125 / DSM 18197 / FERM 7344 / JCM 9153 / C-125) (Bacillus halodurans).